The following is a 91-amino-acid chain: MPRSLKKGPFIDLHLLKKVEAALEANDKRPIKTWSRRSTVFPEMVGLTIAVHNGKQHVPVYVTEDMVGHKLGEFAATRTYRGHAADKKAKR.

Belongs to the universal ribosomal protein uS19 family.

Functionally, protein S19 forms a complex with S13 that binds strongly to the 16S ribosomal RNA. This chain is Small ribosomal subunit protein uS19, found in Marinobacter nauticus (strain ATCC 700491 / DSM 11845 / VT8) (Marinobacter aquaeolei).